Consider the following 408-residue polypeptide: Acetate kinase (408 aa).

Mg(2+) is bound at residue Asn7. Lys14 serves as a coordination point for ATP. Residue Arg91 coordinates substrate. Asp148 functions as the Proton donor/acceptor in the catalytic mechanism. ATP-binding positions include 208–212, 283–285, and 331–335; these read HLGNG, DFR, and GIGEN. A Mg(2+)-binding site is contributed by Glu384.

It belongs to the acetokinase family. In terms of assembly, homodimer. Mg(2+) is required as a cofactor. Mn(2+) serves as cofactor.

It is found in the cytoplasm. The enzyme catalyses acetate + ATP = acetyl phosphate + ADP. It functions in the pathway metabolic intermediate biosynthesis; acetyl-CoA biosynthesis; acetyl-CoA from acetate: step 1/2. Its function is as follows. Catalyzes the formation of acetyl phosphate from acetate and ATP. Can also catalyze the reverse reaction. The protein is Acetate kinase of Methanosarcina acetivorans (strain ATCC 35395 / DSM 2834 / JCM 12185 / C2A).